A 431-amino-acid chain; its full sequence is Glutamate--tRNA ligase 1 (431 aa).

The 'HIGH' region signature appears at 6–16; sequence PSPTGDMHIGN. The 'KMSKS' region motif lies at 235–239; the sequence is KMSKR. Residue lysine 238 participates in ATP binding.

This sequence belongs to the class-I aminoacyl-tRNA synthetase family. Glutamate--tRNA ligase type 1 subfamily. In terms of assembly, monomer.

It localises to the cytoplasm. The catalysed reaction is tRNA(Glu) + L-glutamate + ATP = L-glutamyl-tRNA(Glu) + AMP + diphosphate. Its function is as follows. Catalyzes the attachment of glutamate to tRNA(Glu) in a two-step reaction: glutamate is first activated by ATP to form Glu-AMP and then transferred to the acceptor end of tRNA(Glu). The polypeptide is Glutamate--tRNA ligase 1 (Campylobacter concisus (strain 13826)).